The primary structure comprises 240 residues: Bactofilin BacP (240 aa).

Residues 116–240 (DVEPGRLPAE…KKVVVKKKTR (125 aa)) are interacts with PadC. A disordered region spans residues 117-240 (VEPGRLPAER…KKVVVKKKTR (124 aa)). A compositionally biased stretch (low complexity) spans 126-150 (RPAVVRPTAVTRPTATPARPTIPAA). Residues 151–173 (RPMPPPPPSRPTPPPPPARPSAP) are compositionally biased toward pro residues. Residues 229–240 (AKKKVVVKKKTR) show a composition bias toward basic residues.

The protein belongs to the bactofilin family. Interacts with BacN and probably also BacO, the 3 proteins colocalize as an extended structure. Interacts with PadC.

The protein localises to the cytoplasm. The protein resides in the cytoskeleton. In terms of biological role, a non-essential component of the chromosome segregation machinery. Positions the ParA-ParB-parS chromosome segregation machinery within the cell; BacP seems to be the most important bactofilin in this process. Forms a heteropolymeric, subpolar scaffold in the cell; BacP probably forms the core, BacO contributes to position and integrity while BacN does not seem to contribute to assembly. In Myxococcus xanthus (strain DK1622), this protein is Bactofilin BacP.